Here is a 432-residue protein sequence, read N- to C-terminus: Short/branched chain specific acyl-CoA dehydrogenase, mitochondrial (432 aa).

The N-terminal 33 residues, 1–33 (MAVSAFQLWRAGGLLRRNFLTHSSSWKIPPRVL), are a transit peptide targeting the mitochondrion. Lysine 70 is subject to N6-acetyllysine; alternate. At lysine 70 the chain carries N6-succinyllysine; alternate. FAD-binding positions include 174–183 (FCLSEAGAGS) and 207–209 (WIS). Position 183 (serine 183) interacts with substrate. Serine 183 is modified (phosphoserine). Tyrosine 229 serves as a coordination point for substrate. Residue lysine 278 is modified to N6-succinyllysine. Tyrosine 283 lines the substrate pocket. Lysine 284 is modified (N6-acetyllysine; alternate). Lysine 284 bears the N6-succinyllysine; alternate mark. 291-294 (NEGR) is a substrate binding site. FAD is bound by residues arginine 319, glutamine 330, and 387–391 (EWMGG). Residue glutamate 414 is the Proton acceptor of the active site. 416–418 (TSN) provides a ligand contact to FAD. N6-acetyllysine is present on lysine 426.

The protein belongs to the acyl-CoA dehydrogenase family. Homotetramer. It depends on FAD as a cofactor. Ubiquitously expressed.

Its subcellular location is the mitochondrion matrix. The enzyme catalyses 2-methylbutanoyl-CoA + oxidized [electron-transfer flavoprotein] + H(+) = (2E)-2-methylbut-2-enoyl-CoA + reduced [electron-transfer flavoprotein]. It catalyses the reaction (2S)-2-methylbutanoyl-CoA + oxidized [electron-transfer flavoprotein] + H(+) = (2E)-2-methylbut-2-enoyl-CoA + reduced [electron-transfer flavoprotein]. It carries out the reaction (2R)-2-methylbutanoyl-CoA + oxidized [electron-transfer flavoprotein] + H(+) = ethylacryloyl-CoA + reduced [electron-transfer flavoprotein]. The catalysed reaction is butanoyl-CoA + oxidized [electron-transfer flavoprotein] + H(+) = (2E)-butenoyl-CoA + reduced [electron-transfer flavoprotein]. The enzyme catalyses 2-methylpropanoyl-CoA + oxidized [electron-transfer flavoprotein] + H(+) = 2-methylpropenoyl-CoA + reduced [electron-transfer flavoprotein]. It catalyses the reaction hexanoyl-CoA + oxidized [electron-transfer flavoprotein] + H(+) = (2E)-hexenoyl-CoA + reduced [electron-transfer flavoprotein]. It carries out the reaction valproyl-CoA + oxidized [electron-transfer flavoprotein] + H(+) = (2E)-2-propylpent-2-enoyl-CoA + reduced [electron-transfer flavoprotein]. It participates in lipid metabolism; mitochondrial fatty acid beta-oxidation. The protein operates within amino-acid degradation; L-isoleucine degradation. With respect to regulation, inhibited by N-ethylmaleimide, hydroxymercuribenzoate, methyl mercury iodide and heavy metals such as Hg2+, Cu2+, and Ag2+. Functionally, short and branched chain specific acyl-CoA dehydrogenase that catalyzes the removal of one hydrogen from C-2 and C-3 of the fatty acyl-CoA thioester, resulting in the formation of trans-2-enoyl-CoA. Among the different mitochondrial acyl-CoA dehydrogenases, acts specifically on short and branched chain acyl-CoA derivatives such as (S)-2-methylbutyryl-CoA as well as short straight chain acyl-CoAs such as butyryl-CoA. Plays an important role in the metabolism of L-isoleucine by catalyzing the dehydrogenation of 2-methylbutyryl-CoA, one of the steps of the L-isoleucine catabolic pathway. Can also act on valproyl-CoA, a metabolite of the valproic acid drug. The sequence is that of Short/branched chain specific acyl-CoA dehydrogenase, mitochondrial from Rattus norvegicus (Rat).